The sequence spans 216 residues: Calcium-binding protein 2 (216 aa).

Residues 1–41 (MGNCAKTPWHRGSKERWQWPGSPLGGSRPSPGPRTEEQEGT) are disordered. Gly2 carries N-myristoyl glycine lipidation. A compositionally biased stretch (low complexity) spans 20-29 (PGSPLGGSRP). EF-hand domains follow at residues 74-109 (EEIE…LGYM), 125-142 (GKVD…KLLA), 148-183 (IGVR…LLGE), and 185-216 (LSQR…MMSR). Residues Asp87, Asp89, Asp91, Tyr93, and Glu98 each coordinate Ca(2+). Positions 161, 163, 165, 167, 172, 198, 200, 202, and 209 each coordinate Ca(2+).

As to expression, expressed in the inner hair cells (IHCs), outer hair cells,(OHCs) and vestibular hair cells within the ear and in the retina (at protein level). Expressed in the retinal cone type 6 ON-bipolar cells and type 1 OFF-bipolar cells (at protein level). Expressed in the organ of Corti and spiral ganglion neurons in the cochlea (at protein level).

It is found in the cytoplasm. It localises to the perinuclear region. The protein resides in the cell membrane. Its subcellular location is the golgi apparatus. Required for sound encoding at inner hair cells (IHCs) synapses, likely via inhibition of the inactivation of voltage-gated calcium channel of type 1.3 (Cav1.3) in the IHCs. Required for the normal transfer of light signals through the retina. This is Calcium-binding protein 2 (Cabp2) from Mus musculus (Mouse).